A 185-amino-acid chain; its full sequence is Ribosome-recycling factor (185 aa).

The protein belongs to the RRF family.

The protein localises to the cytoplasm. In terms of biological role, responsible for the release of ribosomes from messenger RNA at the termination of protein biosynthesis. May increase the efficiency of translation by recycling ribosomes from one round of translation to another. The polypeptide is Ribosome-recycling factor (Hahella chejuensis (strain KCTC 2396)).